Reading from the N-terminus, the 428-residue chain is Maltoporin (428 aa).

The N-terminal stretch at 1 to 21 (MKKTLLAVAIGGAMFATSAAA) is a signal peptide.

Belongs to the porin LamB (TC 1.B.3) family. In terms of assembly, homotrimer formed of three 18-stranded antiparallel beta-barrels, containing three independent channels.

Its subcellular location is the cell outer membrane. It carries out the reaction beta-maltose(in) = beta-maltose(out). Functionally, involved in the transport of maltose and maltodextrins. This Mannheimia succiniciproducens (strain KCTC 0769BP / MBEL55E) protein is Maltoporin.